The sequence spans 944 residues: Altered inheritance of mitochondria protein 3 (944 aa).

Disordered regions lie at residues 1-331 (MGFW…PQMN), 349-805 (MSST…TGQD), 821-901 (RKTN…KSLE), and 916-944 (SAAD…HKLK). Basic residues predominate over residues 36-54 (ASKKHYNNSKARRERKSGK). Residues Ser57, Ser58, and Ser64 each carry the phosphoserine modification. Over residues 59 to 69 (DEEYESEDEME) the composition is skewed to acidic residues. Basic and acidic residues predominate over residues 70 to 84 (YERKPTDIRSLKDPK). Low complexity-rich tracts occupy residues 93 to 105 (PGQK…QQQQ) and 130 to 158 (QSQY…PPIY). The segment covering 166-244 (GSNSNATSYQ…YVSHGSTNLG (79 aa)) has biased composition (polar residues). Low complexity-rich tracts occupy residues 245 to 267 (QSQF…VLPS) and 306 to 318 (QQQQ…QQQQ). A compositionally biased stretch (polar residues) spans 349-362 (MSSTTNMQDSNPSY). Residues 374-390 (GGQPPVPVRMQPQPPQP) are compositionally biased toward pro residues. A compositionally biased stretch (polar residues) spans 461 to 470 (IQPNTTSSAA). Ser471 carries the post-translational modification Phosphoserine. Composition is skewed to basic and acidic residues over residues 483–497 (DNER…DEST), 521–536 (HGLD…KNAL), and 606–623 (EIKD…DRNV). Low complexity-rich tracts occupy residues 625 to 640 (PSLL…SQSQ) and 664 to 673 (SQSSNSSDSS). Thr726 carries the phosphothreonine modification. Residues 746–756 (DSSKDANKYEK) show a composition bias toward basic and acidic residues. Residues 760-771 (PVTSSIQAQQST) show a composition bias toward polar residues. Thr858 carries the post-translational modification Phosphothreonine. Residues 859-876 (PPRPPPSRSSPKKVPPVV) show a composition bias toward pro residues. Basic residues predominate over residues 885–896 (KKPPVVPKKKPL).

This sequence belongs to the AIM3 family. In terms of assembly, interacts with RVS167.

It is found in the membrane raft. This is Altered inheritance of mitochondria protein 3 (AIM3) from Saccharomyces cerevisiae (strain YJM789) (Baker's yeast).